A 204-amino-acid polypeptide reads, in one-letter code: Large ribosomal subunit protein bL25 (204 aa).

It belongs to the bacterial ribosomal protein bL25 family. CTC subfamily. As to quaternary structure, part of the 50S ribosomal subunit; part of the 5S rRNA/L5/L18/L25 subcomplex. Contacts the 5S rRNA. Binds to the 5S rRNA independently of L5 and L18.

Functionally, this is one of the proteins that binds to the 5S RNA in the ribosome where it forms part of the central protuberance. The chain is Large ribosomal subunit protein bL25 from Burkholderia mallei (strain NCTC 10247).